The primary structure comprises 425 residues: Serine--tRNA ligase (425 aa).

Residue 233–235 (TAE) participates in L-serine binding. Residue 264 to 266 (RRE) coordinates ATP. Glu-287 is a binding site for L-serine. An ATP-binding site is contributed by 351-354 (EISS). Ser-387 is an L-serine binding site.

Belongs to the class-II aminoacyl-tRNA synthetase family. Type-1 seryl-tRNA synthetase subfamily. As to quaternary structure, homodimer. The tRNA molecule binds across the dimer.

It localises to the cytoplasm. It carries out the reaction tRNA(Ser) + L-serine + ATP = L-seryl-tRNA(Ser) + AMP + diphosphate + H(+). It catalyses the reaction tRNA(Sec) + L-serine + ATP = L-seryl-tRNA(Sec) + AMP + diphosphate + H(+). The protein operates within aminoacyl-tRNA biosynthesis; selenocysteinyl-tRNA(Sec) biosynthesis; L-seryl-tRNA(Sec) from L-serine and tRNA(Sec): step 1/1. Functionally, catalyzes the attachment of serine to tRNA(Ser). Is also able to aminoacylate tRNA(Sec) with serine, to form the misacylated tRNA L-seryl-tRNA(Sec), which will be further converted into selenocysteinyl-tRNA(Sec). This Thermotoga neapolitana (strain ATCC 49049 / DSM 4359 / NBRC 107923 / NS-E) protein is Serine--tRNA ligase.